Reading from the N-terminus, the 595-residue chain is Elongation factor 4 (595 aa).

A tr-type G domain is found at 2–184 (ETIRNFSIIA…TITHNIPYPK (183 aa)). Residues 14 to 19 (DHGKST) and 131 to 134 (NKID) each bind GTP.

Belongs to the TRAFAC class translation factor GTPase superfamily. Classic translation factor GTPase family. LepA subfamily.

It is found in the cell membrane. The enzyme catalyses GTP + H2O = GDP + phosphate + H(+). In terms of biological role, required for accurate and efficient protein synthesis under certain stress conditions. May act as a fidelity factor of the translation reaction, by catalyzing a one-codon backward translocation of tRNAs on improperly translocated ribosomes. Back-translocation proceeds from a post-translocation (POST) complex to a pre-translocation (PRE) complex, thus giving elongation factor G a second chance to translocate the tRNAs correctly. Binds to ribosomes in a GTP-dependent manner. This chain is Elongation factor 4, found in Buchnera aphidicola subsp. Baizongia pistaciae (strain Bp).